Consider the following 224-residue polypeptide: Large ribosomal subunit protein bL25 (224 aa).

The protein belongs to the bacterial ribosomal protein bL25 family. CTC subfamily. In terms of assembly, part of the 50S ribosomal subunit; part of the 5S rRNA/L5/L18/L25 subcomplex. Contacts the 5S rRNA. Binds to the 5S rRNA independently of L5 and L18.

This is one of the proteins that binds to the 5S RNA in the ribosome where it forms part of the central protuberance. The polypeptide is Large ribosomal subunit protein bL25 (Psychrobacter arcticus (strain DSM 17307 / VKM B-2377 / 273-4)).